Reading from the N-terminus, the 231-residue chain is NDR1/HIN1-like protein 3 (231 aa).

A helical membrane pass occupies residues 47–67; sequence VIFNILITIAVLLGIAALIIW. 4 N-linked (GlcNAc...) asparagine glycosylation sites follow: Asn-102, Asn-135, Asn-145, and Asn-215.

May form oligomers or be a component of larger protein complex in plasma membranes. Post-translationally, glycosylated. In terms of tissue distribution, expressed in roots, young and senescing leaves, cauline leaves, stems and siliques.

It is found in the cell membrane. Its function is as follows. Confers resistance to Pseudomonas syringae pv. tomato DC3000 (Pst DC3000). This chain is NDR1/HIN1-like protein 3, found in Arabidopsis thaliana (Mouse-ear cress).